The sequence spans 165 residues: Glycine cleavage system H protein, mitochondrial (165 aa).

The Lipoyl-binding domain occupies 57–139 (NAIVGISSYA…YEKGWLFKVD (83 aa)). N6-lipoyllysine is present on Lys98.

The protein belongs to the GcvH family. As to quaternary structure, the glycine cleavage system is composed of four proteins: P, T, L and H. Requires (R)-lipoate as cofactor.

Its subcellular location is the mitochondrion. In terms of biological role, the glycine cleavage system catalyzes the degradation of glycine. The H protein shuttles the methylamine group of glycine from the P protein to the T protein. The polypeptide is Glycine cleavage system H protein, mitochondrial (ppl) (Drosophila melanogaster (Fruit fly)).